Here is a 398-residue protein sequence, read N- to C-terminus: Phosphoglycerate kinase (398 aa).

Substrate contacts are provided by residues 24 to 26, arginine 40, 63 to 66, arginine 122, and arginine 155; these read DFN and HMGR. ATP is bound by residues lysine 206, glycine 294, glutamate 325, and 354–357; that span reads GGDS.

The protein belongs to the phosphoglycerate kinase family. In terms of assembly, monomer.

The protein resides in the cytoplasm. The catalysed reaction is (2R)-3-phosphoglycerate + ATP = (2R)-3-phospho-glyceroyl phosphate + ADP. It functions in the pathway carbohydrate degradation; glycolysis; pyruvate from D-glyceraldehyde 3-phosphate: step 2/5. This is Phosphoglycerate kinase from Picosynechococcus sp. (strain ATCC 27264 / PCC 7002 / PR-6) (Agmenellum quadruplicatum).